The sequence spans 355 residues: Methyltransferase FUS9 (355 aa).

S-adenosyl-L-homocysteine is bound by residues tyrosine 18, asparagine 63, aspartate 86, serine 123, and phenylalanine 124. Phenylalanine 231 is a binding site for Mg(2+).

The protein belongs to the methyltransferase superfamily. Type-7 methyltransferase family. It depends on Mg(2+) as a cofactor.

It functions in the pathway mycotoxin biosynthesis. In terms of biological role, methyltransferase; part of the gene cluster that mediates the biosynthesis of the mycotoxin fusarin C. Within the cluster, FUS1, FUS2, FUS8 and FUS9 are sufficient for fusarin production. The roles of the other FUS members are yet undetermined. The fusarin C synthetase FUS1 is responsible for the condensation of one acetyl-coenzyme A (CoA) unit with six malonyl-CoA units and the amide linkage of the arising heptaketide and homoserine, subsequently releasing the first intermediate, prefusarin, as an alcohol with an open ring structure. The cytochrome P450 monooxygenase FUS8 participates in multiple oxidation processes at carbon C-20 and is able to use the FUS1 product as substrate, resulting in formation of 20-hydroxy-prefusarin. This reaction seems to be essential before the 2-pyrrolidone ring closure can be catalyzed by FUS2, generating 20-hydroxy-fusarin. FUS8 is able to further oxidizes carbon C-20 after ring closure, resulting in the formation of carboxy-fusarin C. As the last step, FUS9 methylates the hydroxyl group at C-21 to generate fusarin C. Fusarin C can then rearrange to epi-fusarin C, the (z)-isomers, and fusarin A and fusarin D. The chain is Methyltransferase FUS9 from Gibberella moniliformis (strain M3125 / FGSC 7600) (Maize ear and stalk rot fungus).